The following is a 139-amino-acid chain: Transcription factor E (139 aa).

The region spanning 7-91 (IINKKQDEVS…DYEKILDTLL (85 aa)) is the HTH TFE/IIEalpha-type domain.

The protein belongs to the TFE family. In terms of assembly, monomer. Interaction with RNA polymerase subunits RpoF and RpoE is necessary for Tfe stimulatory transcription activity. Able to interact with Tbp and RNA polymerase in the absence of DNA promoter. Interacts both with the preinitiation and elongation complexes.

In terms of biological role, transcription factor that plays a role in the activation of archaeal genes transcribed by RNA polymerase. Facilitates transcription initiation by enhancing TATA-box recognition by TATA-box-binding protein (Tbp), and transcription factor B (Tfb) and RNA polymerase recruitment. Not absolutely required for transcription in vitro, but particularly important in cases where Tbp or Tfb function is not optimal. It dynamically alters the nucleic acid-binding properties of RNA polymerases by stabilizing the initiation complex and destabilizing elongation complexes. Seems to translocate with the RNA polymerase following initiation and acts by binding to the non template strand of the transcription bubble in elongation complexes. The sequence is that of Transcription factor E from Nanoarchaeum equitans (strain Kin4-M).